A 1366-amino-acid chain; its full sequence is DNA-directed RNA polymerase subunit beta' (1366 aa).

Over residues 1–20 (MTSSKPKKTSRVRKTTKNSK) the composition is skewed to basic residues. Residues 1 to 33 (MTSSKPKKTSRVRKTTKNSKKNNPVTMPALAKT) form a disordered region. Residues Cys248, Cys315, Cys322, and Cys325 each contribute to the Zn(2+) site. The tract at residues 1291 to 1366 (YTVDMPQSPA…LQEEGLLSDE (76 aa)) is disordered. A compositionally biased stretch (low complexity) spans 1354–1366 (LEGLQEEGLLSDE).

The protein belongs to the RNA polymerase beta' chain family. RpoC2 subfamily. In cyanobacteria the RNAP catalytic core is composed of 2 alpha, 1 beta, 1 beta', 1 gamma and 1 omega subunit. When a sigma factor is associated with the core the holoenzyme is formed, which can initiate transcription. Requires Zn(2+) as cofactor.

It carries out the reaction RNA(n) + a ribonucleoside 5'-triphosphate = RNA(n+1) + diphosphate. In terms of biological role, DNA-dependent RNA polymerase catalyzes the transcription of DNA into RNA using the four ribonucleoside triphosphates as substrates. This chain is DNA-directed RNA polymerase subunit beta', found in Prochlorococcus marinus (strain AS9601).